The following is a 391-amino-acid chain: 3-ketoacyl-CoA thiolase (391 aa).

Catalysis depends on C95, which acts as the Acyl-thioester intermediate. Catalysis depends on proton acceptor residues H347 and C377.

This sequence belongs to the thiolase-like superfamily. Thiolase family. Heterotetramer of two alpha chains (FadB) and two beta chains (FadA).

It is found in the cytoplasm. It carries out the reaction an acyl-CoA + acetyl-CoA = a 3-oxoacyl-CoA + CoA. It participates in lipid metabolism; fatty acid beta-oxidation. Functionally, catalyzes the final step of fatty acid oxidation in which acetyl-CoA is released and the CoA ester of a fatty acid two carbons shorter is formed. The sequence is that of 3-ketoacyl-CoA thiolase from Stutzerimonas stutzeri (strain A1501) (Pseudomonas stutzeri).